Reading from the N-terminus, the 111-residue chain is Large ribosomal subunit protein uL22 (111 aa).

Belongs to the universal ribosomal protein uL22 family. As to quaternary structure, part of the 50S ribosomal subunit.

This protein binds specifically to 23S rRNA; its binding is stimulated by other ribosomal proteins, e.g. L4, L17, and L20. It is important during the early stages of 50S assembly. It makes multiple contacts with different domains of the 23S rRNA in the assembled 50S subunit and ribosome. Its function is as follows. The globular domain of the protein is located near the polypeptide exit tunnel on the outside of the subunit, while an extended beta-hairpin is found that lines the wall of the exit tunnel in the center of the 70S ribosome. The polypeptide is Large ribosomal subunit protein uL22 (Fusobacterium nucleatum subsp. nucleatum (strain ATCC 25586 / DSM 15643 / BCRC 10681 / CIP 101130 / JCM 8532 / KCTC 2640 / LMG 13131 / VPI 4355)).